The following is a 604-amino-acid chain: Phosphomethylpyrimidine synthase (604 aa).

Substrate is bound by residues N218, M247, Y276, H312, 332 to 334, 373 to 376, and E412; these read SRG and DGLR. H416 is a Zn(2+) binding site. Residue Y439 participates in substrate binding. Residue H480 participates in Zn(2+) binding. [4Fe-4S] cluster contacts are provided by C560, C563, and C568.

Belongs to the ThiC family. Homodimer. The cofactor is [4Fe-4S] cluster.

It catalyses the reaction 5-amino-1-(5-phospho-beta-D-ribosyl)imidazole + S-adenosyl-L-methionine = 4-amino-2-methyl-5-(phosphooxymethyl)pyrimidine + CO + 5'-deoxyadenosine + formate + L-methionine + 3 H(+). The protein operates within cofactor biosynthesis; thiamine diphosphate biosynthesis. Functionally, catalyzes the synthesis of the hydroxymethylpyrimidine phosphate (HMP-P) moiety of thiamine from aminoimidazole ribotide (AIR) in a radical S-adenosyl-L-methionine (SAM)-dependent reaction. The polypeptide is Phosphomethylpyrimidine synthase (Zymomonas mobilis subsp. mobilis (strain ATCC 31821 / ZM4 / CP4)).